A 471-amino-acid polypeptide reads, in one-letter code: MHHMPRTTGMNVAVVGGGISGLAVAHHLRSRGTDAVLLESSARLGGAVGTHALAGYLVEQGPNSFLDREPATRALAAALNLEGRIRAADPAAKRRYVYTRGRLRSVPASPPAFLASDILPLGARLRVAGELFSRRAPEGVDESLAAFGRRHLGHRATQVLLDAVQTGIYAGDVEQLSVAATFPMLVKMEREHRSLILGAIRAQKAQRQAALPAGTAPKLSGALSTFDGGLQVLIDALAASLGDAAHVGARVEGLAREDGGWRLIIEEHGRRAELSVAQVVLAAPAHATAKLLRPLDDALAALVAGIAYAPIAVVHLGFDAGTLPAPDGFGFLVPAEEQRRMLGAIHASTTFPFRAEGGRVLYSCMVGGARQPGLVEQDEDALAALAREELKALAGVTARPSFTRVFRWPLGIPQYNLGHLERVAAIDAALQRLPGLHLIGNAYKGVGLNDCIRNAAQLADALVAGNTSHAP.

Residues 16-21, 39-40, alanine 47, 61-64, valine 251, tryptophan 408, and 446-448 contribute to the FAD site; these read GGGISG, ES, GPNS, and VGL.

Belongs to the protoporphyrinogen/coproporphyrinogen oxidase family. Protoporphyrinogen oxidase subfamily. In terms of assembly, monomer. Homodimer. Requires FAD as cofactor.

The protein localises to the cytoplasm. It localises to the cell membrane. It catalyses the reaction protoporphyrinogen IX + 3 O2 = protoporphyrin IX + 3 H2O2. Its pathway is porphyrin-containing compound metabolism; protoporphyrin-IX biosynthesis; protoporphyrin-IX from protoporphyrinogen-IX: step 1/1. Its activity is regulated as follows. Strongly inhibited by acifluorfen. Functionally, catalyzes the 6-electron oxidation of protoporphyrinogen-IX to form protoporphyrin-IX. Does not oxidize coproporphyrinogen III. Involved in the classical protoporphyrin-dependent (PPD) heme b biosynthesis. The protein is Protoporphyrinogen oxidase of Myxococcus xanthus.